A 903-amino-acid chain; its full sequence is Protein translocase subunit SecA (903 aa).

Residues Q89, 107-111 (GEGKT), and D502 contribute to the ATP site. Positions 887, 889, 898, and 899 each coordinate Zn(2+).

Belongs to the SecA family. Monomer and homodimer. Part of the essential Sec protein translocation apparatus which comprises SecA, SecYEG and auxiliary proteins SecDF-YajC and YidC. Zn(2+) is required as a cofactor.

Its subcellular location is the cell inner membrane. It localises to the cytoplasm. The enzyme catalyses ATP + H2O + cellular proteinSide 1 = ADP + phosphate + cellular proteinSide 2.. Functionally, part of the Sec protein translocase complex. Interacts with the SecYEG preprotein conducting channel. Has a central role in coupling the hydrolysis of ATP to the transfer of proteins into and across the cell membrane, serving both as a receptor for the preprotein-SecB complex and as an ATP-driven molecular motor driving the stepwise translocation of polypeptide chains across the membrane. This is Protein translocase subunit SecA from Jannaschia sp. (strain CCS1).